The chain runs to 461 residues: V-type ATP synthase beta chain (461 aa).

Belongs to the ATPase alpha/beta chains family.

Its function is as follows. Produces ATP from ADP in the presence of a proton gradient across the membrane. The V-type beta chain is a regulatory subunit. The protein is V-type ATP synthase beta chain of Clostridium botulinum (strain ATCC 19397 / Type A).